The sequence spans 1018 residues: Contactin-1 (1018 aa).

An N-terminal signal peptide occupies residues 1 to 20; it reads MKMWLLFSLLVIISFKTCLS. Ig-like C2-type domains lie at 41 to 131, 137 to 223, 241 to 326, 331 to 407, 413 to 500, and 504 to 601; these read PIFE…ATLS, PFPP…KSVF, PADI…ARIY, PEWV…AELK, PTFE…GTLV, and PTRI…LVVR. 2 disulfide bridges follow: Cys65–Cys114 and Cys158–Cys211. Residues Asn208 and Asn258 are each glycosylated (N-linked (GlcNAc...) asparagine). The cysteines at positions 263 and 310 are disulfide-linked. Asn338 carries an N-linked (GlcNAc...) asparagine glycan. Cystine bridges form between Cys352/Cys391 and Cys436/Cys484. Residues Asn457, Asn473, Asn494, and Asn521 are each glycosylated (N-linked (GlcNAc...) asparagine). A disulfide bridge links Cys526 with Cys583. An N-linked (GlcNAc...) asparagine glycan is attached at Asn591. 4 Fibronectin type-III domains span residues 606-704, 709-806, 811-906, and 907-1000; these read PPGG…TDGA, APSD…SAQD, APTA…APPS, and QPPR…ILSP. Disordered stretches follow at residues 698-718 and 891-910; these read KIKTDGAAPNVAPSDVGGGGG and PPSDMTETFTKKAPPSQPPR. Residue Ser999 is the site of GPI-anchor amidated serine attachment. Residues 1000–1018 constitute a propeptide, removed in mature form; that stretch reads PCLLGFLLPALGILVYLEF.

It belongs to the immunoglobulin superfamily. Contactin family. Monomer. Interacts with CNTNAP1 in cis form. Binds to the carbonic-anhydrase like domain of PTPRZ1. Interacts with NOTCH1 and TNR. Detected in a complex with NRCAM and PTPRB. Interacts with TASOR.

The protein localises to the cell membrane. Its function is as follows. Contactins mediate cell surface interactions during nervous system development. Involved in the formation of paranodal axo-glial junctions in myelinated peripheral nerves and in the signaling between axons and myelinating glial cells via its association with CNTNAP1. Participates in oligodendrocytes generation by acting as a ligand of NOTCH1. Its association with NOTCH1 promotes NOTCH1 activation through the released notch intracellular domain (NICD) and subsequent translocation to the nucleus. Interaction with TNR induces a repulsion of neurons and an inhibition of neurite outgrowth. This is Contactin-1 (CNTN1) from Bos taurus (Bovine).